A 657-amino-acid polypeptide reads, in one-letter code: Probable potassium transport system protein Kup 1 (657 aa).

12 consecutive transmembrane segments (helical) span residues V40–G60, V88–L108, W135–T155, P172–V192, A198–M218, F241–T261, W282–L302, L320–I340, L380–S400, Y402–W422, A432–L452, and L454–T474.

Belongs to the HAK/KUP transporter (TC 2.A.72) family.

The protein resides in the cell inner membrane. The enzyme catalyses K(+)(in) + H(+)(in) = K(+)(out) + H(+)(out). Its function is as follows. Transport of potassium into the cell. Likely operates as a K(+):H(+) symporter. This is Probable potassium transport system protein Kup 1 from Bradyrhizobium diazoefficiens (strain JCM 10833 / BCRC 13528 / IAM 13628 / NBRC 14792 / USDA 110).